The following is a 240-amino-acid chain: Thiopurine S-methyltransferase (240 aa).

Position 24 to 35 (24 to 35 (WKEKWVTRHISF)) interacts with S-adenosyl-L-methionine. Position 34 is a phosphoserine (serine 34). Residue phenylalanine 35 coordinates substrate. Position 53 is an N6-acetyllysine (lysine 53). Residues leucine 64, glutamate 85, 129-130 (SI), and arginine 147 contribute to the S-adenosyl-L-methionine site.

This sequence belongs to the class I-like SAM-binding methyltransferase superfamily. TPMT family. In terms of assembly, monomer.

The protein resides in the cytoplasm. The enzyme catalyses S-adenosyl-L-methionine + a thiopurine = S-adenosyl-L-homocysteine + a thiopurine S-methylether.. The catalysed reaction is mercaptopurine + S-adenosyl-L-methionine = 6-methylthiopurine + S-adenosyl-L-homocysteine + H(+). Catalyzes the S-methylation of thiopurine drugs such as 6-mercaptopurine (also called mercaptopurine, 6-MP or its brand name Purinethol) using S-adenosyl-L-methionine as the methyl donor. TPMT activity modulates the cytotoxic effects of thiopurine prodrugs. A natural substrate for this enzyme has yet to be identified. In Mus musculus (Mouse), this protein is Thiopurine S-methyltransferase (Tpmt).